The primary structure comprises 96 residues: ESAT-6-like protein EsxH (96 aa).

The Zn(2+) site is built by histidine 14, histidine 70, histidine 76, and glutamate 77.

This sequence belongs to the WXG100 family. ESAT-6 subfamily. Forms a tight 1:1 complex with EsxG. When it is complexed to EsxG, interacts directly with host HGS/HRS.

The protein localises to the secreted. Functionally, esxH, in complex with EsxG, disrupts ESCRT function and impairs host phagosome maturation, thereby promoting intracellular bacterial growth. The complex acts by interacting, via EsxH, with the host hepatocyte growth factor-regulated tyrosine kinase substrate (HGS/HRS), a component of the ESCRT machinery. This chain is ESAT-6-like protein EsxH, found in Mycobacterium tuberculosis (strain ATCC 25618 / H37Rv).